Here is a 556-residue protein sequence, read N- to C-terminus: Phosphomethylpyrimidine synthase (556 aa).

Substrate contacts are provided by residues asparagine 191, methionine 220, tyrosine 249, histidine 285, serine 305–glycine 307, aspartate 346–arginine 349, and glutamate 385. Histidine 389 lines the Zn(2+) pocket. Position 412 (tyrosine 412) interacts with substrate. Histidine 453 contacts Zn(2+). Cysteine 535, cysteine 538, and cysteine 543 together coordinate [4Fe-4S] cluster.

Belongs to the ThiC family. Requires [4Fe-4S] cluster as cofactor.

It carries out the reaction 5-amino-1-(5-phospho-beta-D-ribosyl)imidazole + S-adenosyl-L-methionine = 4-amino-2-methyl-5-(phosphooxymethyl)pyrimidine + CO + 5'-deoxyadenosine + formate + L-methionine + 3 H(+). It functions in the pathway cofactor biosynthesis; thiamine diphosphate biosynthesis. Functionally, catalyzes the synthesis of the hydroxymethylpyrimidine phosphate (HMP-P) moiety of thiamine from aminoimidazole ribotide (AIR) in a radical S-adenosyl-L-methionine (SAM)-dependent reaction. The chain is Phosphomethylpyrimidine synthase from Chlorobaculum tepidum (strain ATCC 49652 / DSM 12025 / NBRC 103806 / TLS) (Chlorobium tepidum).